The sequence spans 185 residues: Ribosome-recycling factor (185 aa).

The protein belongs to the RRF family.

It localises to the cytoplasm. Responsible for the release of ribosomes from messenger RNA at the termination of protein biosynthesis. May increase the efficiency of translation by recycling ribosomes from one round of translation to another. The chain is Ribosome-recycling factor from Klebsiella pneumoniae (strain 342).